A 163-amino-acid chain; its full sequence is MHTRAIYPGTFDPITNGHADLIERAAKLFKHVIIGIAANPSKQPRFTLEERVELVNRVTAHLDNVEVVGFSGLLVDFAKEQKASVLVRGLRAVSDFEYEFQLANMNRRLSPDLESVFLTPAEENSFISSTLVKEVALHGGDVSQFVHSEVATALAAKLKLAKP.

T10 contacts substrate. Residues T10 to F11 and H18 each bind ATP. K42, L74, and R88 together coordinate substrate. ATP-binding positions include G89–R91, E99, and N124–T130.

It belongs to the bacterial CoaD family. As to quaternary structure, homohexamer. Mg(2+) serves as cofactor.

It is found in the cytoplasm. The enzyme catalyses (R)-4'-phosphopantetheine + ATP + H(+) = 3'-dephospho-CoA + diphosphate. The protein operates within cofactor biosynthesis; coenzyme A biosynthesis; CoA from (R)-pantothenate: step 4/5. Reversibly transfers an adenylyl group from ATP to 4'-phosphopantetheine, yielding dephospho-CoA (dPCoA) and pyrophosphate. The protein is Phosphopantetheine adenylyltransferase of Shewanella baltica (strain OS195).